Consider the following 730-residue polypeptide: MGRRKKMVERVTALMSNPLMIRNIGIVAHIDHGKTTLSDNLLAGAGMISKELAGRQLFMDSDAEEQERGITIDSSNVSMVHEYEGKEYLINLIDTPGHVDFGGDVTRAMRAVDGAVVVIDAVEGTMPQTETVLRQALKEHVKPVLFINKVDRLINELQVDDQEMQIRLGKLIDHVNKLIKGMNEERYNAGWRVDAAEGTVAFGSALYNWAISVPMMKKTGVSFSEVFNYCREEDMKSLAEKCPLHEAVNDMVIRFLPSPIDAQKGRVGAIWHGDHESGIGKQMSVADAKGDVAFMVTDISMDPHAGEVSTGRLFSGSLSRGMEVYVSGASKTNRIQQVGVFMGPERLEVDAIPAGNIAAVTGLRDAFVGATVTTLEGMEPFESIKHASEPVVTVAVEAKHMKDLPKLVEVLRQVAKEDPTLKITLDEETGEHLMAGMGELHLEVIAHRIERDKGVEITTTPPLVVYRETITGTAGPVEGKSPNRHNRFYVIVEPLEPEVRELIRNDEISMRMPEVERREKLMAAGLNKDEAKKIVNIFESNAYFDMTKGIQYLNETMELIIEGFTEVMKAGPLSKEPCMGVKVKLMDAKLHEDAVHRGPAQVIPASRQAIQAAMLMADDTLFEPYQKVFIQVPQEQMGGATKEIQGRRGVIIDMTSEGDTTVIESKAPVSELFGFAGDIRSATEGRAMWSTEFAGFEPLPMSLMTEVVTGIRKRKGLKAALPQAEDFMSM.

A tr-type G domain is found at 19-229 (LMIRNIGIVA…GVSFSEVFNY (211 aa)). Residues 28–35 (AHIDHGKT), 94–98 (DTPGH), and 148–151 (NKVD) each bind GTP. H596 bears the Diphthamide mark.

Belongs to the TRAFAC class translation factor GTPase superfamily. Classic translation factor GTPase family. EF-G/EF-2 subfamily.

It localises to the cytoplasm. In terms of biological role, catalyzes the GTP-dependent ribosomal translocation step during translation elongation. During this step, the ribosome changes from the pre-translocational (PRE) to the post-translocational (POST) state as the newly formed A-site-bound peptidyl-tRNA and P-site-bound deacylated tRNA move to the P and E sites, respectively. Catalyzes the coordinated movement of the two tRNA molecules, the mRNA and conformational changes in the ribosome. In Methanococcoides burtonii (strain DSM 6242 / NBRC 107633 / OCM 468 / ACE-M), this protein is Elongation factor 2 (fusA).